Reading from the N-terminus, the 312-residue chain is Olfactory receptor 6C68 (312 aa).

The Extracellular segment spans residues 1-23; the sequence is MRKHTAITTFILLGLTEDPQLQV. The chain crosses the membrane as a helical span at residues 24–44; sequence LLFMFLFITYMLSVTGKLTII. The Cytoplasmic portion of the chain corresponds to 45-55; it reads ALTMLDPHLKT. The helical transmembrane segment at 56 to 76 threads the bilayer; the sequence is PMYFFLQNLSFLEISFTATCV. Topologically, residues 77 to 95 are extracellular; it reads PRFLYSISTGNKIITYNAC. A disulfide bridge links C95 with C177. Residues 96–116 traverse the membrane as a helical segment; it reads VIQLFFADLFGVTEFFLLATM. The Cytoplasmic segment spans residues 117–143; that stretch reads SYDRYVAICKPLHYMAIMSNKVCKTMV. Residues 144–164 form a helical membrane-spanning segment; that stretch reads ICCWMAALMIILPPLSLGFHL. Residues 165–197 lie on the Extracellular side of the membrane; it reads EFCDSNVINHFGCDALPILKIPCSDTSLIEQMV. Residues 198–218 traverse the membrane as a helical segment; sequence VASAVLTFIITLVCVVLSYTY. The Cytoplasmic portion of the chain corresponds to 219–239; the sequence is IIRTILKFPSVQQKKKAFSTC. A helical membrane pass occupies residues 240 to 260; it reads SSHITVVSITYGSCIFIYIKP. Residues 261–271 are Extracellular-facing; the sequence is SAKEEVNINKG. The helical transmembrane segment at 272–292 threads the bilayer; the sequence is VSVLISSISPMLNSFIYTLRN. Residues 293-312 are Cytoplasmic-facing; that stretch reads EQVKQAFHDSLKKIAFRLKK.

Belongs to the G-protein coupled receptor 1 family.

It localises to the cell membrane. In terms of biological role, odorant receptor. This Homo sapiens (Human) protein is Olfactory receptor 6C68 (OR6C68).